We begin with the raw amino-acid sequence, 190 residues long: METLKRKIIDEGRLLDGHILKVDNFLNHQIDVRLMNDIGQAFAERFAGTRIDKILTIEASGIAVAAIASQYFGFVPVVFGKKTQSLNLDAEAFESEVYSYTKQTSYKVRVSKRYLRPGEQVLIIDDFLANGAAASGLIDIVRQAGAEPVGVGIVIEKGFQPGRSKIEAHGIRVESLAIIQSFDDNQVHFG.

Xanthine-binding residues include L20 and N27. 129 to 133 (ANGAA) contacts 5-phospho-alpha-D-ribose 1-diphosphate. K157 serves as a coordination point for xanthine.

This sequence belongs to the purine/pyrimidine phosphoribosyltransferase family. Xpt subfamily. Homodimer.

Its subcellular location is the cytoplasm. The catalysed reaction is XMP + diphosphate = xanthine + 5-phospho-alpha-D-ribose 1-diphosphate. It participates in purine metabolism; XMP biosynthesis via salvage pathway; XMP from xanthine: step 1/1. Functionally, converts the preformed base xanthine, a product of nucleic acid breakdown, to xanthosine 5'-monophosphate (XMP), so it can be reused for RNA or DNA synthesis. This Laribacter hongkongensis (strain HLHK9) protein is Xanthine phosphoribosyltransferase.